Here is a 125-residue protein sequence, read N- to C-terminus: Putative superoxide reductase (125 aa).

Fe cation contacts are provided by glutamate 12, histidine 14, histidine 40, histidine 46, cysteine 110, and histidine 113.

The protein belongs to the desulfoferrodoxin family. The cofactor is Fe cation.

It carries out the reaction reduced [rubredoxin] + superoxide + 2 H(+) = oxidized [rubredoxin] + H2O2. Functionally, uses electrons from reduced NADP, by way of rubredoxin and an oxidoreductase, to catalyze the reduction of superoxide to hydrogen peroxide. The polypeptide is Putative superoxide reductase (Archaeoglobus fulgidus (strain ATCC 49558 / DSM 4304 / JCM 9628 / NBRC 100126 / VC-16)).